Reading from the N-terminus, the 191-residue chain is RRP15-like protein (191 aa).

Positions 1–11 (MSTKNRDRLVV) are enriched in basic and acidic residues. A disordered region spans residues 1–52 (MSTKNRDRLVVTEDSDDDNEREEMSSGGESGEEGPSSVDGGAGDADETVAFP). Residues 53-84 (AIERRKKKVIKKLTKKEQSLKKSVKEYRIKLA) are a coiled coil. Basic and acidic residues predominate over residues 119–153 (QKTMSDAVKEKMTARERREARQRFDGKNFDSDRFA). Residues 119 to 191 (QKTMSDAVKE…IDTGNYSDED (73 aa)) are disordered. Acidic residues predominate over residues 166–191 (GEDDDGEDQMDIGEEQIDTGNYSDED).

This sequence belongs to the RRP15 family.

The chain is RRP15-like protein from Caenorhabditis elegans.